Here is a 738-residue protein sequence, read N- to C-terminus: Glycogen [starch] synthase, muscle (738 aa).

At Ser-8 the chain carries Phosphoserine; by AMPK and PKA. At Ser-11 the chain carries Phosphoserine. Lys-39 is a binding site for UDP. UDP-alpha-D-glucose contacts are provided by His-205 and Arg-211. Positions 291, 292, 294, 297, and 301 each coordinate alpha-D-glucose 6-phosphate. Arg-331 contacts UDP. Residue Arg-331 coordinates UDP-alpha-D-glucose. Ser-412 is subject to Phosphoserine. His-501 is an alpha-D-glucose 6-phosphate binding site. 3 residues coordinate UDP-alpha-D-glucose: Glu-510, Trp-512, and Gly-513. UDP is bound at residue Thr-515. Alpha-D-glucose 6-phosphate is bound by residues Arg-582 and Arg-586. The interval 632 to 738 (QGYRYPRPAS…PTSSLGEERN (107 aa)) is disordered. Residues Ser-641 and Ser-645 each carry the phosphoserine modification. The residue at position 649 (Ser-649) is a Phosphoserine; by GSK3-alpha and GSK3-beta. Residues Ser-652, Ser-653, Ser-657, and Ser-672 each carry the phosphoserine modification. Residues 682 to 695 (AKDRRNIRAPEWPR) show a composition bias toward basic and acidic residues. Phosphoserine occurs at positions 698, 709, and 711. Low complexity predominate over residues 698 to 738 (SCSSSTGGSKRSNSVDTGPSSSLSTPTEPLSPTSSLGEERN). Thr-722 is modified (phosphothreonine). A phosphoserine mark is found at Ser-728 and Ser-732.

It belongs to the glycosyltransferase 3 family. As to quaternary structure, part of the GYS1-GYG1 complex, a heterooctamer composed of a tetramer of GYS1 and 2 dimers of GYG1, where each GYS1 protomer binds to one GYG1 subunit (via GYG1 C-terminus); the GYS1 tetramer may dissociate from GYG1 dimers to continue glycogen polymerization on its own. Post-translationally, phosphorylation at Ser-8 by AMPK inactivates the enzyme activity. Primed phosphorylation at Ser-657 (site 5) by CSNK2A1 and CSNK2A2 is required for inhibitory phosphorylation at Ser-641 (site 3a), Ser-645 (site 3b), Ser-649 (site 3c) and Ser-653 (site 4) by GSK3A an GSK3B. Phosphorylated at Ser-641 by PASK, leading to inactivation; phosphorylation by PASK is inhibited by glycogen. Phosphorylated at Ser-641 by DYRK2, leading to inactivation. Dephosphorylation at Ser-641 and Ser-645 by PP1 activates the enzyme.

It catalyses the reaction [(1-&gt;4)-alpha-D-glucosyl](n) + UDP-alpha-D-glucose = [(1-&gt;4)-alpha-D-glucosyl](n+1) + UDP + H(+). It functions in the pathway glycan biosynthesis; glycogen biosynthesis. With respect to regulation, allosteric activation by glucose-6-phosphate. Phosphorylation reduces the activity towards UDP-glucose. When in the non-phosphorylated state, glycogen synthase does not require glucose-6-phosphate as an allosteric activator; when phosphorylated it does. Functionally, glycogen synthase participates in the glycogen biosynthetic process along with glycogenin and glycogen branching enzyme. Extends the primer composed of a few glucose units formed by glycogenin by adding new glucose units to it. In this context, glycogen synthase transfers the glycosyl residue from UDP-Glc to the non-reducing end of alpha-1,4-glucan. The chain is Glycogen [starch] synthase, muscle (Gys1) from Rattus norvegicus (Rat).